Consider the following 695-residue polypeptide: F-box only protein 34 (695 aa).

3 disordered regions span residues 239-275 (GQSRGIPPAPEPFSAPETCEEPKEQENPETGRSQGEP), 316-373 (LTNG…CPSL), and 472-524 (GQDQ…PGGS). One can recognise an F-box domain in the interval 556-608 (QQYMACLPHHIIVKIFRLLPTLSLAILKCTCRYFKSIIEYYNIRPADSRWVRD).

In terms of assembly, directly interacts with SKP1 and CUL1.

In terms of biological role, substrate-recognition component of the SCF (SKP1-CUL1-F-box protein)-type E3 ubiquitin ligase complex. The sequence is that of F-box only protein 34 (Fbxo34) from Mus musculus (Mouse).